The chain runs to 1642 residues: Mitochondrial 3' processome subunit 2 (1642 aa).

Residues 1 to 27 constitute a mitochondrion transit peptide; sequence MGLPFLCHTRVCLFSNKIPFVLCGSRF. Disordered stretches follow at residues 43 to 69 and 745 to 772; these read ETLNFPELSSPSTSKEPSVGSDSPQKK and KGEKTDVVQHQQPSRLNEGGELPTLSGP. The span at 49 to 65 shows a compositional bias: polar residues; that stretch reads ELSSPSTSKEPSVGSDS.

As to quaternary structure, component of the mitochondrial 3' processome (MPsome) complex composed at least of terminal uridylyltransferase KRET1/TUT1, 3'-5' exonuclease DSS1, MPSS1, MPSS2 and MPSS3. Within the complex, interacts with DSS1.

It is found in the mitochondrion. In terms of biological role, as part of the mitochondrial 3' processome (MPsome), involved in the maturation of guided RNA (gRNA) precursors. The chain is Mitochondrial 3' processome subunit 2 from Trypanosoma brucei brucei.